Consider the following 95-residue polypeptide: Protein IDA-LIKE 2 (95 aa).

The N-terminal stretch at 1–35 (MSSRNQRSRITSSFFVSFFTRTILLLLILLLGFCN) is a signal peptide. The segment at 75 to 95 (ASGPSRKHNDIGLLSWHRSSP) is disordered.

As to expression, expressed in leaves, buds, flowers, seedlings and seeds. Detected at the base of pedicel, in the floral and funicule abscission zones and in vascular tissues.

The protein resides in the secreted. Its subcellular location is the extracellular space. Functionally, may be involved in floral abscission. In Arabidopsis thaliana (Mouse-ear cress), this protein is Protein IDA-LIKE 2 (IDL2).